A 214-amino-acid polypeptide reads, in one-letter code: UPF0301 protein NFA_55110 (214 aa).

The segment at 1 to 24 is disordered; sequence MARADDPDERKTQGGHGDRRRREF.

The protein belongs to the UPF0301 (AlgH) family.

This chain is UPF0301 protein NFA_55110, found in Nocardia farcinica (strain IFM 10152).